The chain runs to 348 residues: Gamma-glutamyl hydrolase 1 (348 aa).

The first 23 residues, 1–23, serve as a signal peptide directing secretion; the sequence is MIDNNCLYKEELNRNSYSGLAKE. Residues 46-342 form the Gamma-glutamyl hydrolase domain; sequence SPDPNLNYRP…RGYDEVYIFT (297 aa). The active-site Nucleophile is C156. Residue H269 is part of the active site.

Belongs to the peptidase C26 family. In terms of tissue distribution, highly expressed in roots and at lower levels in leaves, stems and siliques.

Its subcellular location is the vacuole. The protein resides in the secreted. The protein localises to the extracellular space. It localises to the cell wall. It carries out the reaction (6S)-5,6,7,8-tetrahydrofolyl-(gamma-L-Glu)(n) + (n-1) H2O = (6S)-5,6,7,8-tetrahydrofolate + (n-1) L-glutamate. Cleaves the polyglutamate sidechains of folate polyglutamates in the vacuole. Is important for polyglutamyl tail length determination before vacuolar exit. Plays a role in folate stability and intracellular folate content. This chain is Gamma-glutamyl hydrolase 1 (GGH1), found in Arabidopsis thaliana (Mouse-ear cress).